Reading from the N-terminus, the 1247-residue chain is uncharacterized protein (1247 aa).

8 disordered regions span residues K25–P141, A169–Q431, Q472–S667, N738–I770, Y807–E857, G869–N1087, S1099–Q1122, and Q1139–G1162. The segment covering Y26–Y125 has biased composition (low complexity). Positions K126 to S139 are enriched in polar residues. Low complexity-rich tracts occupy residues A169–S178, S185–S223, and N230–S341. Residues K342–L356 show a composition bias toward polar residues. Low complexity-rich tracts occupy residues N363–N375, G385–G394, Q409–Q431, and Q472–Q484. A compositionally biased stretch (polar residues) spans G511–L522. Composition is skewed to low complexity over residues N523–N544, Y553–N628, T655–S667, N738–H759, Y807–N855, and N871–N928. Positions G929–K942 are enriched in polar residues. A compositionally biased stretch (low complexity) spans S943–H983. A compositionally biased stretch (basic residues) spans S984 to Y995. Over residues N996–G1021 the composition is skewed to low complexity. The segment covering Y1026–V1044 has biased composition (polar residues). The span at I1047–G1060 shows a compositional bias: pro residues. Residues N1064 to N1087 are compositionally biased toward low complexity. The segment covering S1099–S1108 has biased composition (polar residues). A compositionally biased stretch (low complexity) spans Q1110–Q1122.

This is an uncharacterized protein from Dictyostelium discoideum (Social amoeba).